Reading from the N-terminus, the 210-residue chain is Superoxide dismutase [Mn], mitochondrial (210 aa).

Mn(2+)-binding residues include H29, H77, D164, and H168.

This sequence belongs to the iron/manganese superoxide dismutase family. Homotetramer. It depends on Mn(2+) as a cofactor.

The protein resides in the mitochondrion matrix. It catalyses the reaction 2 superoxide + 2 H(+) = H2O2 + O2. Its function is as follows. Destroys superoxide anion radicals which are normally produced within the cells and which are toxic to biological systems. This chain is Superoxide dismutase [Mn], mitochondrial (sodB), found in Aspergillus niger.